Reading from the N-terminus, the 791-residue chain is Cellobionic acid phosphorylase (791 aa).

The Proton donor role is filled by Asp478.

This sequence belongs to the glycosyl hydrolase 94 family. Cellobionic acid phosphorylase subfamily. In terms of assembly, homodimer.

It catalyses the reaction 4-O-beta-D-glucopyranosyl-D-gluconate + phosphate = D-gluconate + alpha-D-glucose 1-phosphate. It participates in glycan metabolism; cellulose degradation. Its function is as follows. Catalyzes the reversible phosphorolysis of cellobionic acid (4-O-beta-D-glucopyranosyl-D-gluconate), a probable step in cellulose degradation. May be part of a metabolic pathway where cellobionic acid is converted into alpha-D-glucose 1-phosphate and D-gluconic acid to enter glycolysis and the pentose phosphate pathway, respectively. Produces 4-O-beta-D-glucopyranosyl-D-glucuronate from alpha-D-glucose 1-phosphate and D-glucuronate with low activity in the synthetic direction. This chain is Cellobionic acid phosphorylase, found in Neurospora crassa (strain ATCC 24698 / 74-OR23-1A / CBS 708.71 / DSM 1257 / FGSC 987).